The chain runs to 433 residues: E3 ubiquitin-protein ligase RGLG5 (433 aa).

The interval 1-61 is disordered; that stretch reads MGGSSSKESP…SYNSGRQTPK (61 aa). The N-myristoyl glycine moiety is linked to residue glycine 2. The span at 22 to 39 shows a compositional bias: low complexity; that stretch reads SVSGSSSYSSAWDQSSYY. The span at 40–61 shows a compositional bias: polar residues; the sequence is QTPNHPSASPVSSYNSGRQTPK. The 221-residue stretch at 93–313 folds into the VWFA domain; that stretch reads NLIVGIDVTK…KEAEFALSAL (221 aa). The disordered stretch occupies residues 340–383; that stretch reads IALPPPTYATQSMRNSPRTSRSTSFQNKPYDNGVSSTPPSTTHN. Residues 347 to 383 are compositionally biased toward polar residues; sequence YATQSMRNSPRTSRSTSFQNKPYDNGVSSTPPSTTHN. The segment at 390-423 adopts an RING-type zinc-finger fold; it reads CPVCLVSAKNMAFNCGHQTCAGCGEDLHVCPICR.

Interacts with PP2CA. Post-translationally, N-myristoylated.

The protein localises to the cell membrane. The catalysed reaction is S-ubiquitinyl-[E2 ubiquitin-conjugating enzyme]-L-cysteine + [acceptor protein]-L-lysine = [E2 ubiquitin-conjugating enzyme]-L-cysteine + N(6)-ubiquitinyl-[acceptor protein]-L-lysine.. Its function is as follows. Together with RGLG1, mediates the ubiquitination and subsequent proteasomal degradation of the target protein PP2CA. Functions as a positive regulator of abscisic acid (ABA) signaling through ABA-dependent degradation of PP2CA, a major inhibitor of ABA signaling. The polypeptide is E3 ubiquitin-protein ligase RGLG5 (Arabidopsis thaliana (Mouse-ear cress)).